Consider the following 260-residue polypeptide: Purine nucleoside phosphorylase XF_0940 (260 aa).

His-79, Cys-120, and His-137 together coordinate Zn(2+).

The protein belongs to the purine nucleoside phosphorylase YfiH/LACC1 family. In terms of assembly, homodimer. Requires Cu(2+) as cofactor. Zn(2+) is required as a cofactor.

It carries out the reaction adenosine + phosphate = alpha-D-ribose 1-phosphate + adenine. It catalyses the reaction S-methyl-5'-thioadenosine + phosphate = 5-(methylsulfanyl)-alpha-D-ribose 1-phosphate + adenine. The catalysed reaction is inosine + phosphate = alpha-D-ribose 1-phosphate + hypoxanthine. The enzyme catalyses adenosine + H2O + H(+) = inosine + NH4(+). In terms of biological role, purine nucleoside enzyme that catalyzes the phosphorolysis of adenosine and inosine nucleosides, yielding D-ribose 1-phosphate and the respective free bases, adenine and hypoxanthine. Also catalyzes the phosphorolysis of S-methyl-5'-thioadenosine into adenine and S-methyl-5-thio-alpha-D-ribose 1-phosphate. Also has adenosine deaminase activity. The protein is Purine nucleoside phosphorylase XF_0940 of Xylella fastidiosa (strain 9a5c).